The primary structure comprises 303 residues: B1 kinase (303 aa).

Belongs to the protein kinase superfamily. Ser/Thr protein kinase family. Poxviruses subfamily. In terms of assembly, interacts with host JIP1; this interaction increases the amount of MAPK bound to JIP1 and subsequently increases the activity of transcription factors, such as JUN, that respond to these complexes. Interacts with protein OPG198; this interaction inhibits the repressive activity of OPG198 pseudokinase on viral replication factory formation. The cofactor is Mg(2+). Post-translationally, autophosphorylated.

Its subcellular location is the virion. The protein resides in the host cytoplasm. The catalysed reaction is L-seryl-[protein] + ATP = O-phospho-L-seryl-[protein] + ADP + H(+). It carries out the reaction L-threonyl-[protein] + ATP = O-phospho-L-threonyl-[protein] + ADP + H(+). Functionally, essential serine/threonine-protein kinase that plays different role in the viral life cycle. Phosphorylates the host small ribosomal protein RACK1 thereby customizing the ribosomes to a state optimal for viral mRNAs (which contain poly-A leaders) but not for host mRNAs. Facilitates viral DNA replication by inhibiting host BANF1, a cellular host defense responsive to foreign DNA. Phosphorylates host BANF1 on serine and threonine residues; this leads to BANF1 relocalization to the cytoplasm, loss of dimerization and impaired DNA binding activity. Indeed, BANF1 activity depends on its DNA-binding property which is blocked by VPK1-mediated phosphorylation. Required for viral intermediate genes expression, probably by inhibiting host BANF1. Modulates cellular responses via host JUN by two different mechanisms, either by direct phosphorylation or by modulation of upstream JIP1-MAPK complexes. Seems to participate in the accumulation/processing of late proteins and thus in virion maturation. In addition, inhibits B12 repressive activity on viral DNA replication via a phosphorylation-dependent mechanism. In Cynomys gunnisoni (Gunnison's prairie dog), this protein is B1 kinase (OPG187).